The primary structure comprises 182 residues: ATP synthase subunit delta (182 aa).

The protein belongs to the ATPase delta chain family. In terms of assembly, F-type ATPases have 2 components, F(1) - the catalytic core - and F(0) - the membrane proton channel. F(1) has five subunits: alpha(3), beta(3), gamma(1), delta(1), epsilon(1). CF(0) has four main subunits: a(1), b(1), b'(1) and c(10-14). The alpha and beta chains form an alternating ring which encloses part of the gamma chain. F(1) is attached to F(0) by a central stalk formed by the gamma and epsilon chains, while a peripheral stalk is formed by the delta, b and b' chains.

Its subcellular location is the cellular thylakoid membrane. F(1)F(0) ATP synthase produces ATP from ADP in the presence of a proton or sodium gradient. F-type ATPases consist of two structural domains, F(1) containing the extramembraneous catalytic core and F(0) containing the membrane proton channel, linked together by a central stalk and a peripheral stalk. During catalysis, ATP synthesis in the catalytic domain of F(1) is coupled via a rotary mechanism of the central stalk subunits to proton translocation. Functionally, this protein is part of the stalk that links CF(0) to CF(1). It either transmits conformational changes from CF(0) to CF(1) or is implicated in proton conduction. The polypeptide is ATP synthase subunit delta (Synechococcus sp. (strain CC9311)).